Consider the following 131-residue polypeptide: Small ribosomal subunit protein uS8 (131 aa).

This sequence belongs to the universal ribosomal protein uS8 family. In terms of assembly, part of the 30S ribosomal subunit. Contacts proteins S5 and S12.

Its function is as follows. One of the primary rRNA binding proteins, it binds directly to 16S rRNA central domain where it helps coordinate assembly of the platform of the 30S subunit. This chain is Small ribosomal subunit protein uS8, found in Albidiferax ferrireducens (strain ATCC BAA-621 / DSM 15236 / T118) (Rhodoferax ferrireducens).